Consider the following 249-residue polypeptide: Isoprenyl transferase (249 aa).

Asp29 is an active-site residue. Asp29 is a Mg(2+) binding site. Substrate-binding positions include 30–33 (GNGR), Trp34, Arg42, His46, and 74–76 (STE). Asn77 (proton acceptor) is an active-site residue. Substrate-binding positions include Trp78, Arg80, Arg197, and 203–205 (RLS). Glu216 lines the Mg(2+) pocket.

This sequence belongs to the UPP synthase family. As to quaternary structure, homodimer. The cofactor is Mg(2+).

Functionally, catalyzes the condensation of isopentenyl diphosphate (IPP) with allylic pyrophosphates generating different type of terpenoids. The protein is Isoprenyl transferase of Gloeobacter violaceus (strain ATCC 29082 / PCC 7421).